The sequence spans 460 residues: tRNA modification GTPase MnmE (460 aa).

Arginine 24, glutamate 81, and lysine 121 together coordinate (6S)-5-formyl-5,6,7,8-tetrahydrofolate. Residues 218-384 (GLVVAIAGPP…MVEALAGFAA (167 aa)) enclose the TrmE-type G domain. GTP is bound by residues 228 to 233 (NVGKST), 247 to 253 (SPHAGTT), and 272 to 275 (DTAG). Residues serine 232 and threonine 253 each coordinate Mg(2+). Lysine 460 contacts (6S)-5-formyl-5,6,7,8-tetrahydrofolate.

It belongs to the TRAFAC class TrmE-Era-EngA-EngB-Septin-like GTPase superfamily. TrmE GTPase family. Homodimer. Heterotetramer of two MnmE and two MnmG subunits. It depends on K(+) as a cofactor.

The protein resides in the cytoplasm. Functionally, exhibits a very high intrinsic GTPase hydrolysis rate. Involved in the addition of a carboxymethylaminomethyl (cmnm) group at the wobble position (U34) of certain tRNAs, forming tRNA-cmnm(5)s(2)U34. The sequence is that of tRNA modification GTPase MnmE from Rhodopseudomonas palustris (strain HaA2).